The primary structure comprises 197 residues: Guanylate kinase (197 aa).

The region spanning 7–185 (GLIIILSSPS…TLKKIHEIIV (179 aa)) is the Guanylate kinase-like domain. Residue 14 to 21 (SPSGTGKS) coordinates ATP.

The protein belongs to the guanylate kinase family.

The protein localises to the cytoplasm. It carries out the reaction GMP + ATP = GDP + ADP. Essential for recycling GMP and indirectly, cGMP. This is Guanylate kinase (gmk) from Rickettsia prowazekii (strain Madrid E).